A 469-amino-acid polypeptide reads, in one-letter code: Carboxypeptidase Q (469 aa).

Residues 1–19 (MKTLILTLLSLYELQLCCG) form the signal peptide. Positions 20-42 (AYNQNIRSQRKFEMIKTEISSYK) are excised as a propeptide. Asn59 and Asn159 each carry an N-linked (GlcNAc...) asparagine glycan. Positions 288 and 300 each coordinate Zn(2+). Residue Glu334 is the Nucleophile of the active site. Glu335 contributes to the Zn(2+) binding site. An N-linked (GlcNAc...) asparagine glycan is attached at Asn351. Asp362 is a binding site for Zn(2+). The N-linked (GlcNAc...) asparagine glycan is linked to Asn394. Position 432 (His432) interacts with Zn(2+).

The protein belongs to the peptidase M28 family. In terms of assembly, homodimer. The monomeric form is inactive while the homodimer is active.

Its subcellular location is the endoplasmic reticulum. The protein resides in the golgi apparatus. The protein localises to the lysosome. It is found in the secreted. In terms of biological role, carboxypeptidase that may play an important role in the hydrolysis of circulating peptides. Catalyzes more efficiently the hydrolysis of dipeptides with unsubstituted terminals into amino acids. This chain is Carboxypeptidase Q (cpq), found in Xenopus laevis (African clawed frog).